Reading from the N-terminus, the 171-residue chain is Endoribonuclease YbeY (171 aa).

The Zn(2+) site is built by histidine 126, histidine 130, and histidine 136.

The protein belongs to the endoribonuclease YbeY family. Requires Zn(2+) as cofactor.

The protein resides in the cytoplasm. Functionally, single strand-specific metallo-endoribonuclease involved in late-stage 70S ribosome quality control and in maturation of the 3' terminus of the 16S rRNA. In Rhizobium etli (strain CIAT 652), this protein is Endoribonuclease YbeY.